Here is a 316-residue protein sequence, read N- to C-terminus: Ornithine carbamoyltransferase (316 aa).

Residues 59-62 (STRT), glutamine 86, arginine 110, and 137-140 (HPCQ) each bind carbamoyl phosphate. Residues asparagine 168, aspartate 232, and 236-237 (SM) contribute to the L-ornithine site. Carbamoyl phosphate contacts are provided by residues 273–274 (CL) and arginine 301.

Belongs to the aspartate/ornithine carbamoyltransferase superfamily. OTCase family.

The protein resides in the cytoplasm. The catalysed reaction is carbamoyl phosphate + L-ornithine = L-citrulline + phosphate + H(+). The protein operates within amino-acid biosynthesis; L-arginine biosynthesis; L-arginine from L-ornithine and carbamoyl phosphate: step 1/3. Functionally, reversibly catalyzes the transfer of the carbamoyl group from carbamoyl phosphate (CP) to the N(epsilon) atom of ornithine (ORN) to produce L-citrulline. The chain is Ornithine carbamoyltransferase from Listeria innocua serovar 6a (strain ATCC BAA-680 / CLIP 11262).